Consider the following 124-residue polypeptide: Ribonuclease pancreatic (124 aa).

Positions 1–21 are disordered; the sequence is AESSAMKFQRQHMDSDGHPDT. Substrate-binding residues include K7 and R10. Residue H12 is the Proton acceptor of the active site. 4 disulfides stabilise this stretch: C26/C84, C40/C95, C58/C110, and C65/C72. Substrate is bound by residues 41–45, K66, and R85; that span reads KPVNT. H119 serves as the catalytic Proton donor.

It belongs to the pancreatic ribonuclease family. As to quaternary structure, monomer. Interacts with and forms tight 1:1 complexes with RNH1. Dimerization of two such complexes may occur. Interaction with RNH1 inhibits this protein. In terms of tissue distribution, pancreas.

The protein localises to the secreted. It catalyses the reaction an [RNA] containing cytidine + H2O = an [RNA]-3'-cytidine-3'-phosphate + a 5'-hydroxy-ribonucleotide-3'-[RNA].. The catalysed reaction is an [RNA] containing uridine + H2O = an [RNA]-3'-uridine-3'-phosphate + a 5'-hydroxy-ribonucleotide-3'-[RNA].. In terms of biological role, endonuclease that catalyzes the cleavage of RNA on the 3' side of pyrimidine nucleotides. Acts on single-stranded and double-stranded RNA. In Galea musteloides (Common yellow-toothed cavy), this protein is Ribonuclease pancreatic (RNASE1).